We begin with the raw amino-acid sequence, 519 residues long: Transcription factor STP1 (519 aa).

Positions 16–35 are i; that stretch reads IPGKIYAFFRELVSGVIISK. Residues 47-61 are compositionally biased toward basic and acidic residues; that stretch reads ATKEEGKDAADEEKT. Disordered stretches follow at residues 47–69 and 115–150; these read ATKEEGKDAADEEKTTTSLFPES and LLGSRPEQDTGAPIKMSTGVTSSPLSPSGSTPEHST. Residues 65-97 are II; that stretch reads LFPESNNIDRSLNGGCSVIPCSMDVSDLNTPIS. Low complexity predominate over residues 131 to 146; sequence STGVTSSPLSPSGSTP. The C2H2-type 1 zinc finger occupies 160–182; sequence FICHYCDATFRIRGYLTRHIKKH. Residues 188-223 form a C2H2-type 2; atypical zinc finger; the sequence is YHCPFFNSATPPDLRCHNSGGFSRRDTYKTHLKARH. Residues 240–265 form a C2H2-type 3; atypical zinc finger; sequence GHCAQCGEYFSTIENFVENHIESGDC. The disordered stretch occupies residues 357–382; sequence IKKKQQQVSGSTVTTPEVATQNNQEV. Residues 364–381 show a composition bias toward polar residues; that stretch reads VSGSTVTTPEVATQNNQE.

Interacts (via Region II) with SSY5; protease component of the SPS-sensor. Post-translationally, phosphorylated by casein kinase I. Phosphorylation is not dependent on the extracellular amino acid levels, but is a prerequisite for proteolytic processing. Activated by the amino acid-induced proteolytic removal of an N-terminal inhibitory domain by serine protease SSY5, an intrinsic component of the SPS-sensor. Processing requires at least 2 components of the SCF(GRR1) ubiquitin ligase complex, namely the F-box protein GRR1 and the E2 enzyme CDC34, but does not depend on the proteasome. Processing is negatively regulated by the protein phosphatase 2A regulatory subunit RTS1.

The protein localises to the cell membrane. Its subcellular location is the nucleus. Functionally, transcription factor involved in the regulation of gene expression in response to extracellular amino acid levels. Synthesized as latent cytoplasmic precursor, which, upon a signal initiated by the plasma membrane SPS (SSY1-PTR3-SSY5) amino acid sensor system, becomes proteolytically activated and relocates to the nucleus, where it induces the expression of SPS-sensor-regulated genes, including the amino-acid permeases AGP1, BAP2, BAP3 and GNP1. Binding to promoters is facilitated by DAL81. Involved in the repression of genes subject to nitrogen catabolite repression and genes involved in stress response. Negatively regulated by inner nuclear membrane proteins ASI1, ASI2 and ASI3, which prevent unprocessed precursor forms that escape cytoplasmic anchoring from inducing SPS-sensor-regulated genes. May be involved in pre-tRNA splicing. The protein is Transcription factor STP1 (STP1) of Saccharomyces cerevisiae (strain RM11-1a) (Baker's yeast).